A 427-amino-acid chain; its full sequence is Lactadherin (427 aa).

An N-terminal signal peptide occupies residues 1-18; it reads MPCPRLLAALFCSSGLFA. 2 EGF-like domains span residues 20–59 and 62–106; these read SGDF…LLCN and EHGP…IHCE. Cystine bridges form between Cys-24–Cys-35, Cys-29–Cys-47, and Cys-49–Cys-58. Ser-27 carries an O-linked (Fuc...) serine; in PAS-6 glycan. An O-linked (Fuc...) threonine; in PAS-7 glycan is attached at Thr-34. Residue Asn-59 is glycosylated (N-linked (GlcNAc...) (hybrid) asparagine; in PAS-6 and PAS-7). 6 disulfides stabilise this stretch: Cys-66–Cys-77, Cys-71–Cys-94, Cys-96–Cys-105, Cys-109–Cys-265, Cys-252–Cys-256, and Cys-270–Cys-427. Residues 85-87 carry the Cell attachment site motif; it reads RGD. 2 consecutive F5/8 type C domains span residues 109–265 and 270–427; these read CTSP…LLGC and CTEP…LLGC. Asn-227 carries N-linked (GlcNAc...) (high mannose) asparagine; in PAS-6 glycosylation.

The two O-linked glycans consist of Gal, GlcNAc and Fuc, with probably Fuc as reducing terminal sugar. In terms of tissue distribution, milk and spermatozoan. Also present in epididymis, kidney, heart, lymphatic gland and spleen but not esophagus, small intestine, muscle and liver.

The protein resides in the membrane. The protein localises to the secreted. It localises to the cytoplasmic vesicle. It is found in the secretory vesicle. Its subcellular location is the acrosome membrane. In terms of biological role, contributes to phagocytic removal of apoptotic cells in many tissues. Plays an important role in the maintenance of intestinal epithelial homeostasis and the promotion of mucosal healing. Promotes VEGF-dependent neovascularization. Specific ligand for the alpha-v/beta-3 and alpha-v/beta-5 receptors. Also binds to phosphatidylserine-enriched cell surfaces in a receptor-independent manner. Zona pellucida-binding protein which may play a role in gamete interaction. This is Lactadherin (MFGE8) from Bos taurus (Bovine).